The following is a 195-amino-acid chain: Probable GTP-binding protein EngB (195 aa).

Residues 24–195 enclose the EngB-type G domain; sequence ELPEIALAGR…EAWDAILEKL (172 aa). GTP-binding positions include 32–39, 59–63, 77–80, 144–147, and 176–178; these read GRSNVGKS, GKTQL, DVPG, TKAD, and FSS. Mg(2+)-binding residues include Ser-39 and Thr-61.

It belongs to the TRAFAC class TrmE-Era-EngA-EngB-Septin-like GTPase superfamily. EngB GTPase family. The cofactor is Mg(2+).

In terms of biological role, necessary for normal cell division and for the maintenance of normal septation. The protein is Probable GTP-binding protein EngB of Streptococcus pneumoniae serotype 4 (strain ATCC BAA-334 / TIGR4).